Reading from the N-terminus, the 515-residue chain is Bifunctional purine biosynthesis protein PurH (515 aa).

The region spanning 1 to 145 (MTKRVLISVS…KNHASVTVVV (145 aa)) is the MGS-like domain.

This sequence belongs to the PurH family.

The catalysed reaction is (6R)-10-formyltetrahydrofolate + 5-amino-1-(5-phospho-beta-D-ribosyl)imidazole-4-carboxamide = 5-formamido-1-(5-phospho-D-ribosyl)imidazole-4-carboxamide + (6S)-5,6,7,8-tetrahydrofolate. It carries out the reaction IMP + H2O = 5-formamido-1-(5-phospho-D-ribosyl)imidazole-4-carboxamide. Its pathway is purine metabolism; IMP biosynthesis via de novo pathway; 5-formamido-1-(5-phospho-D-ribosyl)imidazole-4-carboxamide from 5-amino-1-(5-phospho-D-ribosyl)imidazole-4-carboxamide (10-formyl THF route): step 1/1. It functions in the pathway purine metabolism; IMP biosynthesis via de novo pathway; IMP from 5-formamido-1-(5-phospho-D-ribosyl)imidazole-4-carboxamide: step 1/1. The chain is Bifunctional purine biosynthesis protein PurH from Streptococcus pneumoniae (strain P1031).